The following is a 562-amino-acid chain: Sensor histidine kinase MtrB (562 aa).

2 helical membrane-spanning segments follow: residues 42 to 62 (VVAL…FVLT) and 213 to 233 (GTMA…ALLV). Residues 235 to 287 (RQVVVPVRSASRIAERFAEGHLSERMPVRGEDDMARLAVSFNDMAESLSRQIT) enclose the HAMP domain. Positions 302–519 (DVSHELRTPL…CFRLTLPLVR (218 aa)) constitute a Histidine kinase domain. The tract at residues 526-562 (SPLPMKPILQPSPQASTAGQQHGTQRQRLREHAERSR) is disordered. The segment covering 536–551 (PSPQASTAGQQHGTQR) has biased composition (polar residues). Residues 553–562 (RLREHAERSR) are compositionally biased toward basic and acidic residues.

The protein resides in the cell membrane. It catalyses the reaction ATP + protein L-histidine = ADP + protein N-phospho-L-histidine.. In terms of biological role, member of the two-component regulatory system MtrA/MtrB. Seems to function as a membrane-associated protein kinase that phosphorylates MtrA in response to environmental signals. This chain is Sensor histidine kinase MtrB (mtrB), found in Mycobacterium leprae (strain TN).